We begin with the raw amino-acid sequence, 441 residues long: 3'-N-debenzoyl-2'-deoxytaxol N-benzoyltransferase (441 aa).

Catalysis depends on proton acceptor residues H163 and D373.

This sequence belongs to the plant acyltransferase family.

The catalysed reaction is 3'-N-debenzoyltaxol + benzoyl-CoA = paclitaxel + CoA + H(+). It functions in the pathway alkaloid biosynthesis; taxol biosynthesis. In terms of biological role, catalyzes the stereoselective coupling of the surrogate substrate N-debenzoyl-(3'RS)-2'-deoxytaxol with benzoyl-CoA to form predominantly one 3'-epimer of 2'-deoxytaxol. This enzymatic reaction constitutes the final acylation in the taxol biosynthetic pathway. The polypeptide is 3'-N-debenzoyl-2'-deoxytaxol N-benzoyltransferase (Taxus canadensis (Canadian yew)).